Here is a 1208-residue protein sequence, read N- to C-terminus: ATP-dependent DNA helicase Q4 (1208 aa).

Disordered stretches follow at residues 17–180 (AFRR…ASLS) and 201–333 (FLGA…AGKA). Residue Ser-27 is modified to Phosphoserine. A compositionally biased stretch (basic and acidic residues) spans 36–47 (EETRALYREYRT). The segment covering 61–70 (SSESLPAAAE) has biased composition (low complexity). A compositionally biased stretch (polar residues) spans 86 to 100 (ATKSPQSTPGRSRQG). Phosphoserine occurs at positions 178 and 180. Over residues 273-283 (AQVQQESSQAG) the composition is skewed to polar residues. In terms of domain architecture, Helicase ATP-binding spans 489–662 (VMRILSGIST…AQHLAVAEEP (174 aa)). 502–509 (LPTGAGKS) provides a ligand contact to ATP. Residues 605–608 (DEAH) carry the DEAH box motif. The Helicase C-terminal domain occupies 683-850 (DTDQALLTLL…AVKRLVQRVF (168 aa)). Residues Cys-853 and Cys-855 each coordinate Zn(2+). The tract at residues 860-888 (PPSEQEGAVGGERPVPKYPPQEAEQLSHQ) is disordered. Residues Cys-897 and His-900 each contribute to the Zn(2+) site. The disordered stretch occupies residues 1111–1130 (EEGQEPGGMEDAQGPEPGQA). The interval 1117–1208 (GGMEDAQGPE…ATEELLQVAR (92 aa)) is increases helicase activity about 5-fold (in a fragment starting at residue 427).

Belongs to the helicase family. RecQ subfamily. Interacts with UBR1 and UBR2. Interacts with MCM10; this interaction regulates RECQL4 unwinding activity. Interacts (via residues 1-54) with TOPBP1. It depends on Zn(2+) as a cofactor. As to expression, ubiquitously expressed, with highest levels in thymus and testis.

The protein resides in the cytoplasm. It localises to the nucleus. The enzyme catalyses Couples ATP hydrolysis with the unwinding of duplex DNA by translocating in the 3'-5' direction.. The catalysed reaction is ATP + H2O = ADP + phosphate + H(+). In terms of biological role, an ATP-dependent DNA helicase which unwinds dsDNA with a 3'-overhang in a 3'-5' direction. Does not unwind more than 18 bp of dsDNA. May modulate chromosome segregation. The N-terminal domain (residues 1-54) binds DNA Y-shaped DNA better than ss- or dsDNA. The core helicase domain binds ssDNA. This chain is ATP-dependent DNA helicase Q4 (RECQL4), found in Homo sapiens (Human).